Reading from the N-terminus, the 479-residue chain is Calcium/calmodulin-dependent protein kinase type II delta chain (479 aa).

The Protein kinase domain occupies 14–272; the sequence is YQLFEELGKG…ASEALKHPWI (259 aa). Residues 20 to 28 and Lys43 contribute to the ATP site; that span reads LGKGAFSVV. The active-site Proton acceptor is Asp136. The residue at position 287 (Thr287) is a Phosphothreonine. Phosphoserine occurs at positions 315 and 319. A Phosphothreonine modification is found at Thr337.

The protein belongs to the protein kinase superfamily. CAMK Ser/Thr protein kinase family. CaMK subfamily. In terms of assembly, CAMK2 is composed of four different chains: alpha, beta, gamma, and delta. The different isoforms assemble into homo- or heteromultimeric holoenzymes composed of 8 to 12 subunits.

It catalyses the reaction L-seryl-[protein] + ATP = O-phospho-L-seryl-[protein] + ADP + H(+). The enzyme catalyses L-threonyl-[protein] + ATP = O-phospho-L-threonyl-[protein] + ADP + H(+). Autophosphorylation of CAMK2 plays an important role in the regulation of the kinase activity. Functionally, caM-kinase II (CAMK2) is a prominent kinase in the central nervous system. In Gallus gallus (Chicken), this protein is Calcium/calmodulin-dependent protein kinase type II delta chain (CAMK2D).